The primary structure comprises 384 residues: S-adenosylmethionine synthase (384 aa).

His15 is a binding site for ATP. Asp17 is a Mg(2+) binding site. Glu43 contacts K(+). Glu56 and Gln99 together coordinate L-methionine. Residues 99-109 are flexible loop; sequence QSPDINQGVDR. ATP contacts are provided by residues 164 to 166, 230 to 231, Asp239, 245 to 246, Ala262, and Lys266; these read DAK, RF, and RK. Asp239 provides a ligand contact to L-methionine. Position 270 (Lys270) interacts with L-methionine.

Belongs to the AdoMet synthase family. As to quaternary structure, homotetramer; dimer of dimers. Mg(2+) is required as a cofactor. Requires K(+) as cofactor.

It is found in the cytoplasm. It carries out the reaction L-methionine + ATP + H2O = S-adenosyl-L-methionine + phosphate + diphosphate. The protein operates within amino-acid biosynthesis; S-adenosyl-L-methionine biosynthesis; S-adenosyl-L-methionine from L-methionine: step 1/1. Functionally, catalyzes the formation of S-adenosylmethionine (AdoMet) from methionine and ATP. The overall synthetic reaction is composed of two sequential steps, AdoMet formation and the subsequent tripolyphosphate hydrolysis which occurs prior to release of AdoMet from the enzyme. The chain is S-adenosylmethionine synthase from Cronobacter sakazakii (strain ATCC BAA-894) (Enterobacter sakazakii).